The chain runs to 504 residues: L-amino-acid oxidase (504 aa).

An N-terminal signal peptide occupies residues 1–18 (MNVFFMFSLLFLATLGSC). An intrachain disulfide couples Cys28 to Cys191. FAD contacts are provided by residues 61-62 (MS), 81-82 (EA), Arg89, and 105-108 (GPMR). Arg108 lines the substrate pocket. The N-linked (GlcNAc...) asparagine glycan is linked to Asn190. His241 contributes to the substrate binding site. An FAD-binding site is contributed by Val279. The cysteines at positions 349 and 430 are disulfide-linked. A glycan (N-linked (GlcNAc...) asparagine) is linked at Asn379. Tyr390 is a binding site for substrate. Residues Glu475 and 482-487 (GWIDST) contribute to the FAD site. 482 to 483 (GW) lines the substrate pocket.

The protein belongs to the flavin monoamine oxidase family. FIG1 subfamily. In terms of assembly, homodimer; non-covalently linked. It depends on FAD as a cofactor. As to expression, expressed by the venom gland.

The protein localises to the secreted. It carries out the reaction an L-alpha-amino acid + O2 + H2O = a 2-oxocarboxylate + H2O2 + NH4(+). It catalyses the reaction L-leucine + O2 + H2O = 4-methyl-2-oxopentanoate + H2O2 + NH4(+). The catalysed reaction is L-phenylalanine + O2 + H2O = 3-phenylpyruvate + H2O2 + NH4(+). The enzyme catalyses L-tryptophan + O2 + H2O = indole-3-pyruvate + H2O2 + NH4(+). It carries out the reaction L-methionine + O2 + H2O = 4-methylsulfanyl-2-oxobutanoate + H2O2 + NH4(+). It catalyses the reaction L-tyrosine + O2 + H2O = 3-(4-hydroxyphenyl)pyruvate + H2O2 + NH4(+). Functionally, catalyzes an oxidative deamination of predominantly hydrophobic and aromatic L-amino acids, thus producing hydrogen peroxide that may contribute to the diverse toxic effects of this enzyme. Is highly active on L-Tyr followed by L-Phe, L-Met, L-Leu, L-Trp, and weakly active on L-Ile, L-Arg, L-Val, L-Lys, and L-Ala. Inhibits ADP- and collagen-induced platelet aggregation. This inhibition is inhibited by catalase, indicating the importance of generated H(2)O(2) for the inhibitory effect. This effect on platelets among snake L-amino-acid oxidases is however controversial, since some of them induce aggregation, whereas the other inhibit agonist-induced aggregation. In vivo, this enzyme induces a rapid, substantial and reversible increase in the paw volume of mice (edema). In addition, myofibrosis, and inflammatory cell infiltration on the paw tissue are also observed. This chain is L-amino-acid oxidase, found in Daboia russelii (Russel's viper).